The primary structure comprises 51 residues: Large ribosomal subunit protein eL39 (51 aa).

The protein belongs to the eukaryotic ribosomal protein eL39 family. In terms of assembly, interacts with IMPACT.

The polypeptide is Large ribosomal subunit protein eL39 (RPL39) (Gallus gallus (Chicken)).